The primary structure comprises 345 residues: MALIELRHVKKEFSGKAGKVTALKDIDLTVESGDIYGIIGYSGAGKSTLVRLLNGLETPTEGEVEIQGQDIALLPNKELRNFRKKIGMIFQHFNLLWSRTVLENIMLPLEIAGVPKQNRKSRAEELIKLVGLEGRETAYPSQLSGGQKQRVGIARALANNPDILLCDEATSALDPQTTDEVLELLLKINQELNLTVVLITHEMHVIRKICNRVAVMEYGEIVEEGKVIDIFKKPQTEIAKRFIQQEADKNIEETELVVEEMLEQYPNGKIVRLLFHGEQAKLPIISHIVQEYQVEVSIIQGNIQQTKQGAVGSLYIQLLGEEQNILAAIEGLRKLRVETEVIGNE.

The ABC transporter domain occupies 4–243 (IELRHVKKEF…PQTEIAKRFI (240 aa)). 40–47 (GYSGAGKS) contacts ATP.

The protein belongs to the ABC transporter superfamily. Methionine importer (TC 3.A.1.24) family. The complex is composed of two ATP-binding proteins (MetN), two transmembrane proteins (MetI) and a solute-binding protein (MetQ).

It is found in the cell membrane. It catalyses the reaction L-methionine(out) + ATP + H2O = L-methionine(in) + ADP + phosphate + H(+). The catalysed reaction is D-methionine(out) + ATP + H2O = D-methionine(in) + ADP + phosphate + H(+). Its function is as follows. Part of the ABC transporter complex MetNIQ involved in methionine import. Responsible for energy coupling to the transport system. The protein is Methionine import ATP-binding protein MetN 2 of Enterococcus faecalis (strain ATCC 700802 / V583).